Consider the following 221-residue polypeptide: Large ribosomal subunit protein uL3 (221 aa).

It belongs to the universal ribosomal protein uL3 family. In terms of assembly, part of the 50S ribosomal subunit. Forms a cluster with proteins L14 and L19.

Its function is as follows. One of the primary rRNA binding proteins, it binds directly near the 3'-end of the 23S rRNA, where it nucleates assembly of the 50S subunit. This Chlamydia trachomatis serovar L2 (strain ATCC VR-902B / DSM 19102 / 434/Bu) protein is Large ribosomal subunit protein uL3.